A 456-amino-acid polypeptide reads, in one-letter code: Bifunctional protein GlmU (456 aa).

Residues 1-229 (MLNSAMSVVI…LSEVEGVNNR (229 aa)) form a pyrophosphorylase region. Residues 11–14 (LAAG), lysine 25, glutamine 76, 81–82 (GT), 103–105 (YGD), glycine 140, glutamate 154, asparagine 169, and asparagine 227 each bind UDP-N-acetyl-alpha-D-glucosamine. Mg(2+) is bound at residue aspartate 105. A Mg(2+)-binding site is contributed by asparagine 227. A linker region spans residues 230–250 (LQLSRLERVYQSEQAEKLLLA). Residues 251 to 456 (GVMLRDPARF…QGWQRPAKKK (206 aa)) form an N-acetyltransferase region. Residues arginine 333 and lysine 351 each contribute to the UDP-N-acetyl-alpha-D-glucosamine site. The Proton acceptor role is filled by histidine 363. UDP-N-acetyl-alpha-D-glucosamine is bound by residues tyrosine 366 and asparagine 377. Residues alanine 380, 386–387 (NY), serine 405, alanine 423, and arginine 440 each bind acetyl-CoA.

It in the N-terminal section; belongs to the N-acetylglucosamine-1-phosphate uridyltransferase family. This sequence in the C-terminal section; belongs to the transferase hexapeptide repeat family. Homotrimer. The cofactor is Mg(2+).

Its subcellular location is the cytoplasm. The enzyme catalyses alpha-D-glucosamine 1-phosphate + acetyl-CoA = N-acetyl-alpha-D-glucosamine 1-phosphate + CoA + H(+). It carries out the reaction N-acetyl-alpha-D-glucosamine 1-phosphate + UTP + H(+) = UDP-N-acetyl-alpha-D-glucosamine + diphosphate. It functions in the pathway nucleotide-sugar biosynthesis; UDP-N-acetyl-alpha-D-glucosamine biosynthesis; N-acetyl-alpha-D-glucosamine 1-phosphate from alpha-D-glucosamine 6-phosphate (route II): step 2/2. Its pathway is nucleotide-sugar biosynthesis; UDP-N-acetyl-alpha-D-glucosamine biosynthesis; UDP-N-acetyl-alpha-D-glucosamine from N-acetyl-alpha-D-glucosamine 1-phosphate: step 1/1. It participates in bacterial outer membrane biogenesis; LPS lipid A biosynthesis. Catalyzes the last two sequential reactions in the de novo biosynthetic pathway for UDP-N-acetylglucosamine (UDP-GlcNAc). The C-terminal domain catalyzes the transfer of acetyl group from acetyl coenzyme A to glucosamine-1-phosphate (GlcN-1-P) to produce N-acetylglucosamine-1-phosphate (GlcNAc-1-P), which is converted into UDP-GlcNAc by the transfer of uridine 5-monophosphate (from uridine 5-triphosphate), a reaction catalyzed by the N-terminal domain. This Citrobacter koseri (strain ATCC BAA-895 / CDC 4225-83 / SGSC4696) protein is Bifunctional protein GlmU.